The following is a 270-amino-acid chain: Phosphatidate cytidylyltransferase (270 aa).

A run of 7 helical transmembrane segments spans residues 19–39, 53–73, 76–96, 101–121, 126–146, 183–203, and 248–268; these read LWLT…IGLA, TAFS…LLIL, GALL…VTQW, GWPA…SLLR, FGFT…ITAY, LVAS…ALLL, and ALLY…AIFF.

Belongs to the CDS family.

It localises to the cell inner membrane. The enzyme catalyses a 1,2-diacyl-sn-glycero-3-phosphate + CTP + H(+) = a CDP-1,2-diacyl-sn-glycerol + diphosphate. The protein operates within phospholipid metabolism; CDP-diacylglycerol biosynthesis; CDP-diacylglycerol from sn-glycerol 3-phosphate: step 3/3. This is Phosphatidate cytidylyltransferase (cdsA) from Brucella abortus (strain 2308).